A 420-amino-acid chain; its full sequence is MDQFEVLVAVERLFFAWEQISDKETLVERLEGRLADMNLSLSTSPHRSLFLPYLGTRKDHNVADPDTISSEYGLQLLVLENALAHNYSKAISLLESSTVGDVGYIEWCRCMMRLNILGKSYGNNSELDIGLRSYLRNGAQGSSLLLTDEVSDCRMLGFASLFLQEEYFIAVHHMVRSIHEHPSLVDYLLREEDGRDIFILKEEYKLMLTIAVLVAIPLENYQDFLLLEDLNPLLQGLPELHVCLNLLVSTSFGSFFARWLGPIQELANRSCFLAPVWHSVNSHMRSKILVFYIKISERVTVSYLARTLDIPYDTVMADVSSLIQKFDINIGIEGDLVYYKEDLPVGNLVSKVSQIQREIDSKLLVMKQKNDALRSFIENMLKEQSVEPLNRSQDMDAFELHEQSEDEEYEEEHLEEGENV.

Residues Ser-177–Gly-346 enclose the PCI domain. The disordered stretch occupies residues Val-386–Val-420. Residues Ser-404–Val-420 show a composition bias toward acidic residues.

In terms of assembly, component of a COP9 signalosome-like (CSN) complex.

Its subcellular location is the cytoplasm. The protein localises to the nucleus. Its function is as follows. Component of the COP9 signalosome (CSN) complex that acts as an regulator of the ubiquitin (Ubl) conjugation pathway by mediating the deneddylation of the cullin subunit of SCF-type E3 ubiquitin-protein ligase complexes The CSN complex is involved in the regulation of the mating pheromone response. PCI8 may also be involved in transcriptional and translational control. The sequence is that of COP9 signalosome complex subunit 11 (PCI8) from Eremothecium gossypii (strain ATCC 10895 / CBS 109.51 / FGSC 9923 / NRRL Y-1056) (Yeast).